A 753-amino-acid polypeptide reads, in one-letter code: Photosystem I P700 chlorophyll a apoprotein A1 (753 aa).

8 consecutive transmembrane segments (helical) span residues 73–96 (IFSAHFGHLSIIFVWISGMIFHAA), 159–182 (LYSAAIGALVAAVVMMYAGYYHYH), 198–222 (MTHHLIVLLGLGNLAWTGHLIHVSL), 294–312 (IAHHHLALAVMYIIAGHMY), 349–372 (WHAQLAINLATWGSFSIIVAHHMY), 388–414 (LNLFVHHMWIGGFLIVGGAAHAAIFMV), 436–458 (TIISHLNWVCIFLGFHSFGLYIH), and 534–552 (FMIHHIHAFQIHVTVLILI). [4Fe-4S] cluster contacts are provided by Cys-576 and Cys-585. The next 2 membrane-spanning stretches (helical) occupy residues 592–613 (HIFLGLFWMYNCISIVNFHFFW) and 667–689 (LSAYGILFLGAHFIWAFSLMFLF). His-678 contacts chlorophyll a'. Chlorophyll a is bound by residues Met-686 and Tyr-694. Trp-695 contacts phylloquinone. The helical transmembrane segment at 727–747 (AVGLGHYLLGGIVTSWSFYLA) threads the bilayer.

It belongs to the PsaA/PsaB family. As to quaternary structure, the PsaA/B heterodimer binds the P700 chlorophyll special pair and subsequent electron acceptors. PSI consists of a core antenna complex that captures photons, and an electron transfer chain that converts photonic excitation into a charge separation. The cyanobacterial PSI reaction center is composed of one copy each of PsaA,B,C,D,E,F,I,J,K,L,M and X, and forms trimeric complexes. Requires PSI electron transfer chain: 5 chlorophyll a, 1 chlorophyll a', 2 phylloquinones and 3 4Fe-4S clusters. PSI core antenna: 90 chlorophyll a, 22 carotenoids, 3 phospholipids and 1 galactolipid. P700 is a chlorophyll a/chlorophyll a' dimer, A0 is one or more chlorophyll a, A1 is one or both phylloquinones and FX is a shared 4Fe-4S iron-sulfur center. as cofactor.

It localises to the cellular thylakoid membrane. It carries out the reaction reduced [plastocyanin] + hnu + oxidized [2Fe-2S]-[ferredoxin] = oxidized [plastocyanin] + reduced [2Fe-2S]-[ferredoxin]. PsaA and PsaB bind P700, the primary electron donor of photosystem I (PSI), as well as the electron acceptors A0, A1 and FX. PSI is a plastocyanin/cytochrome c6-ferredoxin oxidoreductase, converting photonic excitation into a charge separation, which transfers an electron from the donor P700 chlorophyll pair to the spectroscopically characterized acceptors A0, A1, FX, FA and FB in turn. Oxidized P700 is reduced on the lumenal side of the thylakoid membrane by plastocyanin or cytochrome c6. The sequence is that of Photosystem I P700 chlorophyll a apoprotein A1 from Acaryochloris marina (strain MBIC 11017).